The sequence spans 256 residues: Beta-fibrinogenase-like (256 aa).

The signal sequence occupies residues Met1 to Ala18. Residues Gln19–Leu24 constitute a propeptide that is removed on maturation. The region spanning Val25 to Ala247 is the Peptidase S1 domain. 6 cysteine pairs are disulfide-bonded: Cys31–Cys161, Cys49–Cys65, Cys96–Cys254, Cys140–Cys208, Cys172–Cys187, and Cys198–Cys223. N-linked (GlcNAc...) asparagine glycosylation occurs at Asn44. His64 serves as the catalytic Charge relay system. N-linked (GlcNAc...) asparagine glycans are attached at residues Asn78 and Asn101. Residue Asp108 is the Charge relay system of the active site. N-linked (GlcNAc...) asparagine glycosylation occurs at Asn152. Ser202 acts as the Charge relay system in catalysis.

It belongs to the peptidase S1 family. Snake venom subfamily. In terms of assembly, monomer. As to expression, expressed by the venom gland.

The protein localises to the secreted. Its function is as follows. Snake venom serine protease that has fibrinogenolytic activities by hydrolyzing the beta chain of fibrinogen (FGB). Typical arginine esterase which hydrolyzes esters and amides of arginine. This Daboia siamensis (Eastern Russel's viper) protein is Beta-fibrinogenase-like.